Consider the following 642-residue polypeptide: Tigger transposable element derived 5 (642 aa).

The segment at 1-54 (MYPASPPAGPALHPVPHRARLPQPRCLAEPPRSPAPGPGSTARPPPPPAPGPRP) is disordered. Residues 31–53 (PRSPAPGPGSTARPPPPPAPGPR) are compositionally biased toward pro residues. An HTH psq-type domain is found at 57-108 (AVKMTFRKAYSIKDKLQAIERVKGGERQASVCRDFGVPGGTLRGWLKDEPKL). DNA-binding regions (H-T-H motif) lie at residues 84–104 (QASV…WLKD) and 155–188 (PVIQ…WQKR). An HTH CENPB-type domain is found at 122–195 (QRKKMRLANE…QKRHGISSQR (74 aa)). The disordered stretch occupies residues 202–238 (SPVAGPAPVKEEPAQSPGAVLVPDGAPATLPHSEGGY). In terms of domain architecture, DDE-1 spans 240–365 (DEQIYNANVT…CLQQKAVLLV (126 aa)). Disordered regions lie at residues 375-400 (TSMP…SPEE) and 548-581 (GCRE…TEQG).

Belongs to the tigger transposable element derived protein family.

It localises to the nucleus. The chain is Tigger transposable element derived 5 (Tigd5) from Mus musculus (Mouse).